A 126-amino-acid chain; its full sequence is Protein ApaG (126 aa).

The ApaG domain maps to 2–126 (ADKLYQMEVQ…MTLVAPRVLH (125 aa)).

This Chromobacterium violaceum (strain ATCC 12472 / DSM 30191 / JCM 1249 / CCUG 213 / NBRC 12614 / NCIMB 9131 / NCTC 9757 / MK) protein is Protein ApaG.